Here is a 347-residue protein sequence, read N- to C-terminus: MGGKMKAIVKNENAFGATLKEIPIPSINENEVLIKVQAASICGTDVHIYNWDQWAQKRIKTPQVFGHEFSGIVAETGKHVTNVKTGDYVSAETHFVCGTCVPCLTGKHHVCTHTKILGVDTAGSFAEYVKVPARNVWKNPADMDPAVASVQEPLGNAVHTVLESSQLAGGSAAIIGCGPIGLMAVAVAKAAGASRIAAIDKNDYRLALAKKLGATITISADKEDPLEVIDTLTGGEGIDLVCEMSGHPAAIAQGLKMAANGGRFHMLSLPERPVTVDLTNDVVFKGLTVQGITGRKMFETWRQVSHLLESGLVDLTPVITHQLPLEDFEKGFDLMRKGQCGKVILIP.

Zn(2+) is bound at residue C42. Active-site charge relay system residues include T44 and H47. Positions 67, 68, 97, 100, 103, and 111 each coordinate Zn(2+). Residues I180, D200, R205, L267–L269, and I292–T293 contribute to the NAD(+) site.

It belongs to the zinc-containing alcohol dehydrogenase family. In terms of assembly, homotetramer. Zn(2+) is required as a cofactor.

Its subcellular location is the cytoplasm. The enzyme catalyses L-threonine + NAD(+) = (2S)-2-amino-3-oxobutanoate + NADH + H(+). It functions in the pathway amino-acid degradation; L-threonine degradation via oxydo-reductase pathway; glycine from L-threonine: step 1/2. Catalyzes the NAD(+)-dependent oxidation of L-threonine to 2-amino-3-ketobutyrate. The sequence is that of L-threonine 3-dehydrogenase from Bacillus velezensis (strain DSM 23117 / BGSC 10A6 / LMG 26770 / FZB42) (Bacillus amyloliquefaciens subsp. plantarum).